A 236-amino-acid chain; its full sequence is 2,3,4,5-tetrahydropyridine-2,6-dicarboxylate N-acetyltransferase (236 aa).

The protein belongs to the transferase hexapeptide repeat family. DapH subfamily.

It catalyses the reaction (S)-2,3,4,5-tetrahydrodipicolinate + acetyl-CoA + H2O = L-2-acetamido-6-oxoheptanedioate + CoA. It functions in the pathway amino-acid biosynthesis; L-lysine biosynthesis via DAP pathway; LL-2,6-diaminopimelate from (S)-tetrahydrodipicolinate (acetylase route): step 1/3. Its function is as follows. Catalyzes the transfer of an acetyl group from acetyl-CoA to tetrahydrodipicolinate. The protein is 2,3,4,5-tetrahydropyridine-2,6-dicarboxylate N-acetyltransferase of Brevibacillus brevis (strain 47 / JCM 6285 / NBRC 100599).